The sequence spans 444 residues: Protein CPn_0808/CP_1063/CPj0808/CpB0837 (444 aa).

Over residues 1-13 (MTSGVSGSSSQDP) the composition is skewed to polar residues. The disordered stretch occupies residues 1–124 (MTSGVSGSSS…NNYDSPSLPT (124 aa)). Over residues 15–24 (LAAQLAQSSQ) the composition is skewed to low complexity. Positions 25 to 42 (KAGNAQSGHDTKNVTKQG) are enriched in polar residues. The segment covering 77-86 (SKGEKSEKSG) has biased composition (basic and acidic residues). Low complexity predominate over residues 88 to 103 (SKSSTSVASASETATA). Polar residues predominate over residues 113-124 (RQNNYDSPSLPT).

Belongs to the chlamydial CPn_0808/CT_579/TC_0868 family.

This Chlamydia pneumoniae (Chlamydophila pneumoniae) protein is Protein CPn_0808/CP_1063/CPj0808/CpB0837.